We begin with the raw amino-acid sequence, 73 residues long: Translation initiation factor IF-1 (73 aa).

The region spanning 1–72 (MAKEDAIEVE…NRGRITYRSK (72 aa)) is the S1-like domain.

Belongs to the IF-1 family. As to quaternary structure, component of the 30S ribosomal translation pre-initiation complex which assembles on the 30S ribosome in the order IF-2 and IF-3, IF-1 and N-formylmethionyl-tRNA(fMet); mRNA recruitment can occur at any time during PIC assembly.

The protein localises to the cytoplasm. Its function is as follows. One of the essential components for the initiation of protein synthesis. Stabilizes the binding of IF-2 and IF-3 on the 30S subunit to which N-formylmethionyl-tRNA(fMet) subsequently binds. Helps modulate mRNA selection, yielding the 30S pre-initiation complex (PIC). Upon addition of the 50S ribosomal subunit IF-1, IF-2 and IF-3 are released leaving the mature 70S translation initiation complex. The chain is Translation initiation factor IF-1 from Syntrophobacter fumaroxidans (strain DSM 10017 / MPOB).